A 427-amino-acid polypeptide reads, in one-letter code: Glutamate-1-semialdehyde 2,1-aminomutase (427 aa).

At Lys265 the chain carries N6-(pyridoxal phosphate)lysine.

The protein belongs to the class-III pyridoxal-phosphate-dependent aminotransferase family. HemL subfamily. As to quaternary structure, homodimer. Pyridoxal 5'-phosphate serves as cofactor.

The protein localises to the cytoplasm. The catalysed reaction is (S)-4-amino-5-oxopentanoate = 5-aminolevulinate. It functions in the pathway porphyrin-containing compound metabolism; protoporphyrin-IX biosynthesis; 5-aminolevulinate from L-glutamyl-tRNA(Glu): step 2/2. The polypeptide is Glutamate-1-semialdehyde 2,1-aminomutase (Burkholderia pseudomallei (strain 1710b)).